Here is a 102-residue protein sequence, read N- to C-terminus: Large ribosomal subunit protein bL21 (102 aa).

The protein belongs to the bacterial ribosomal protein bL21 family. In terms of assembly, part of the 50S ribosomal subunit. Contacts protein L20.

Its function is as follows. This protein binds to 23S rRNA in the presence of protein L20. The chain is Large ribosomal subunit protein bL21 from Listeria monocytogenes serotype 4b (strain CLIP80459).